A 504-amino-acid chain; its full sequence is Maturase K (504 aa).

It belongs to the intron maturase 2 family. MatK subfamily.

The protein resides in the plastid. Its subcellular location is the chloroplast. Usually encoded in the trnK tRNA gene intron. Probably assists in splicing its own and other chloroplast group II introns. This chain is Maturase K, found in Pentaplaris doroteae.